The sequence spans 223 residues: 3,4-dihydroxy-2-butanone 4-phosphate synthase (223 aa).

D-ribulose 5-phosphate contacts are provided by residues 47-48, Asp52, 160-164, and Glu184; these read RE and RRGHT. Residue Glu48 coordinates Mg(2+). His163 contacts Mg(2+).

This sequence belongs to the DHBP synthase family. Homodimer. Mg(2+) is required as a cofactor. Requires Mn(2+) as cofactor.

The enzyme catalyses D-ribulose 5-phosphate = (2S)-2-hydroxy-3-oxobutyl phosphate + formate + H(+). It participates in cofactor biosynthesis; riboflavin biosynthesis; 2-hydroxy-3-oxobutyl phosphate from D-ribulose 5-phosphate: step 1/1. In terms of biological role, catalyzes the conversion of D-ribulose 5-phosphate to formate and 3,4-dihydroxy-2-butanone 4-phosphate. The protein is 3,4-dihydroxy-2-butanone 4-phosphate synthase of Cupriavidus pinatubonensis (strain JMP 134 / LMG 1197) (Cupriavidus necator (strain JMP 134)).